The following is a 327-amino-acid chain: tRNA U34 carboxymethyltransferase (327 aa).

Carboxy-S-adenosyl-L-methionine is bound by residues Lys91, Trp105, Lys110, Gly130, 181–182, Met196, Tyr200, and Arg315; that span reads IE.

This sequence belongs to the class I-like SAM-binding methyltransferase superfamily. CmoB family. In terms of assembly, homotetramer.

The catalysed reaction is carboxy-S-adenosyl-L-methionine + 5-hydroxyuridine(34) in tRNA = 5-carboxymethoxyuridine(34) in tRNA + S-adenosyl-L-homocysteine + H(+). Its function is as follows. Catalyzes carboxymethyl transfer from carboxy-S-adenosyl-L-methionine (Cx-SAM) to 5-hydroxyuridine (ho5U) to form 5-carboxymethoxyuridine (cmo5U) at position 34 in tRNAs. This Pectobacterium atrosepticum (strain SCRI 1043 / ATCC BAA-672) (Erwinia carotovora subsp. atroseptica) protein is tRNA U34 carboxymethyltransferase.